The primary structure comprises 380 residues: tRNA pseudouridine synthase B (380 aa).

Catalysis depends on aspartate 63, which acts as the Nucleophile. Residues glutamine 309–asparagine 339 are disordered. The span at valine 311–aspartate 338 shows a compositional bias: acidic residues.

This sequence belongs to the pseudouridine synthase TruB family. Type 1 subfamily.

It carries out the reaction uridine(55) in tRNA = pseudouridine(55) in tRNA. In terms of biological role, responsible for synthesis of pseudouridine from uracil-55 in the psi GC loop of transfer RNAs. The polypeptide is tRNA pseudouridine synthase B (Psychrobacter arcticus (strain DSM 17307 / VKM B-2377 / 273-4)).